We begin with the raw amino-acid sequence, 957 residues long: Glycine dehydrogenase (decarboxylating) (957 aa).

Residue K708 is modified to N6-(pyridoxal phosphate)lysine.

This sequence belongs to the GcvP family. In terms of assembly, the glycine cleavage system is composed of four proteins: P, T, L and H. The cofactor is pyridoxal 5'-phosphate.

It catalyses the reaction N(6)-[(R)-lipoyl]-L-lysyl-[glycine-cleavage complex H protein] + glycine + H(+) = N(6)-[(R)-S(8)-aminomethyldihydrolipoyl]-L-lysyl-[glycine-cleavage complex H protein] + CO2. Functionally, the glycine cleavage system catalyzes the degradation of glycine. The P protein binds the alpha-amino group of glycine through its pyridoxal phosphate cofactor; CO(2) is released and the remaining methylamine moiety is then transferred to the lipoamide cofactor of the H protein. The protein is Glycine dehydrogenase (decarboxylating) of Enterobacter sp. (strain 638).